A 795-amino-acid polypeptide reads, in one-letter code: Antibiotic resistant DNA gyrase subunit B (795 aa).

A Toprim domain is found at 421–536 (SELYLVEGNS…RGYIYIAQPP (116 aa)). Positions 427, 501, and 503 each coordinate Mg(2+).

Belongs to the type II topoisomerase GyrB family. Heterotetramer, composed of two GyrA and two GyrB chains. In the heterotetramer, GyrA contains the active site tyrosine that forms a transient covalent intermediate with DNA, while GyrB binds cofactors and catalyzes ATP hydrolysis. It depends on Mg(2+) as a cofactor. The cofactor is Mn(2+). Ca(2+) is required as a cofactor.

It localises to the cytoplasm. It carries out the reaction ATP-dependent breakage, passage and rejoining of double-stranded DNA.. A type II topoisomerase that negatively supercoils closed circular double-stranded (ds) DNA in an ATP-dependent manner to modulate DNA topology and maintain chromosomes in an underwound state. Negative supercoiling favors strand separation, and DNA replication, transcription, recombination and repair, all of which involve strand separation. Also able to catalyze the interconversion of other topological isomers of dsDNA rings, including catenanes and knotted rings. Type II topoisomerases break and join 2 DNA strands simultaneously in an ATP-dependent manner. The sequence is that of Antibiotic resistant DNA gyrase subunit B from Neisseria gonorrhoeae.